A 118-amino-acid polypeptide reads, in one-letter code: Protein TusC (118 aa).

It belongs to the DsrF/TusC family. In terms of assembly, heterohexamer, formed by a dimer of trimers. The hexameric TusBCD complex contains 2 copies each of TusB, TusC and TusD. The TusBCD complex interacts with TusE.

The protein localises to the cytoplasm. Functionally, part of a sulfur-relay system required for 2-thiolation of 5-methylaminomethyl-2-thiouridine (mnm(5)s(2)U) at tRNA wobble positions. The sequence is that of Protein TusC from Salmonella paratyphi C (strain RKS4594).